The primary structure comprises 207 residues: Superoxide dismutase [Mn] (207 aa).

The Mn(2+) site is built by His28, His76, Asp160, and His164.

Belongs to the iron/manganese superoxide dismutase family. Mn(2+) serves as cofactor.

It localises to the secreted. It catalyses the reaction 2 superoxide + 2 H(+) = H2O2 + O2. Destroys superoxide anion radicals which are normally produced within the cells and which are toxic to biological systems. The sequence is that of Superoxide dismutase [Mn] (sodA) from Mycolicibacterium paratuberculosis (strain ATCC BAA-968 / K-10) (Mycobacterium paratuberculosis).